The following is a 397-amino-acid chain: L-cysteine desulfidase (397 aa).

The active-site Proton acceptor is Cys-23. [4Fe-4S] cluster contacts are provided by Cys-288, Cys-330, and Cys-337.

This sequence belongs to the L-cysteine desulfidase family. As to quaternary structure, homotrimer. [4Fe-4S] cluster serves as cofactor.

It carries out the reaction L-cysteine + H2O = hydrogen sulfide + pyruvate + NH4(+) + H(+). Catalyzes the cleavage of L-cysteine to form 2-aminoprop-2-enoate and sulfide. The former then spontaneously hydrolyzes to pyruvate and NH(3). May be responsible for the production of sulfide required for the biosynthesis of iron-sulfur centers in this archaea. The sequence is that of L-cysteine desulfidase from Methanococcus maripaludis (strain C5 / ATCC BAA-1333).